Reading from the N-terminus, the 555-residue chain is Bifunctional epoxide hydrolase 2 (555 aa).

A phosphatase region spans residues 1–224 (MTLRAAVFDL…KVTGIQLLNT (224 aa)). Positions 9 and 11 each coordinate Mg(2+). Lysine 43 carries the N6-acetyllysine modification. Lysine 55 is modified (N6-succinyllysine). 123-124 (TN) serves as a coordination point for phosphate. Residue aspartate 185 coordinates Mg(2+). An N6-acetyllysine mark is found at lysine 191 and lysine 215. Residues 235-555 (SDMSHGYVTV…ARNPPVVSKM (321 aa)) are epoxide hydrolase. In terms of domain architecture, AB hydrolase-1 spans 259–531 (PAVCLCHGFP…CGHWTQMDKP (273 aa)). The Nucleophile role is filled by aspartate 335. Serine 370 bears the Phosphoserine mark. Tyrosine 383 contacts substrate. 2 positions are modified to N6-succinyllysine: lysine 421 and lysine 455. Tyrosine 466 functions as the Proton donor in the catalytic mechanism. Cysteine 522 carries S-(15-deoxy-Delta12,14-prostaglandin J2-9-yl)cysteine lipidation. Catalysis depends on histidine 524, which acts as the Proton acceptor. Positions 553–555 (SKM) match the Microbody targeting signal motif. Lysine 554 bears the N6-succinyllysine mark.

Belongs to the AB hydrolase superfamily. Epoxide hydrolase family. Homodimer. Mg(2+) is required as a cofactor. The N-terminus is blocked. Post-translationally, the covalent modification of cysteine by 15-deoxy-Delta12,14-prostaglandin-J2 is autocatalytic and reversible. It may occur as an alternative to other cysteine modifications, such as S-nitrosylation and S-palmitoylation.

It localises to the cytoplasm. Its subcellular location is the peroxisome. It carries out the reaction an epoxide + H2O = an ethanediol. It catalyses the reaction (9S,10S)-10-hydroxy-9-(phosphooxy)octadecanoate + H2O = (9S,10S)-9,10-dihydroxyoctadecanoate + phosphate. The enzyme catalyses 12-phosphooxy-(9Z)-octadecenoate + H2O = 12-hydroxy-(9Z)-octadecenoate + phosphate. The catalysed reaction is 12-phosphooxy-(9E)-octadecenoate + H2O = 12-hydroxy-(9E)-octadecenoate + phosphate. It carries out the reaction 12-(phosphooxy)octadecanoate + H2O = 12-hydroxyoctadecanoate + phosphate. It catalyses the reaction 8,9-epoxy-(5Z,11Z,14Z)-eicosatrienoate + H2O = 8,9-dihydroxy-(5Z,11Z,14Z)-eicosatrienoate. The enzyme catalyses 11,12-epoxy-(5Z,8Z,14Z)-eicosatrienoate + H2O = 11,12-dihydroxy-(5Z,8Z,14Z)-eicosatrienoate. The catalysed reaction is 14,15-epoxy-(5Z,8Z,11Z)-eicosatrienoate + H2O = 14,15-dihydroxy-(5Z,8Z,11Z)-eicosatrienoate. It carries out the reaction 9,10-epoxy-(12Z)-octadecenoate + H2O = 9,10-dihydroxy-(12Z)-octadecenoate. It catalyses the reaction 8-hydroxy-(11S,12S)-epoxy-(5Z,9E,14Z)-eicosatrienoate + H2O = (8,11R,12S)-trihydroxy-(5Z,9E,14Z)-eicosatrienoate. The enzyme catalyses 10-hydroxy-(11S,12S)-epoxy- (5Z,8Z,14Z)-eicosatrienoate + H2O = (10,11S,12R)-trihydroxy-(5Z,8Z,14Z)-eicosatrienoate. The catalysed reaction is 1-tetradecanoyl-sn-glycerol 3-phosphate + H2O = 1-tetradecanoyl-sn-glycerol + phosphate. It carries out the reaction 1-octadecanoyl-sn-glycero-3-phosphate + H2O = 1-octadecanoyl-sn-glycerol + phosphate. It catalyses the reaction 1-(5Z,8Z,11Z,14Z-eicosatetraenoyl)-sn-glycero-3-phosphate + H2O = 1-(5Z,8Z,11Z,14Z-eicosatetraenoyl)-sn-glycerol + phosphate. The enzyme catalyses 1-hexadecanoyl-sn-glycero-3-phosphate + H2O = 1-hexadecanoyl-sn-glycerol + phosphate. The catalysed reaction is 1-(9Z-octadecenoyl)-sn-glycero-3-phosphate + H2O = 1-(9Z-octadecenoyl)-sn-glycerol + phosphate. It carries out the reaction (8S,9R)-epoxy-(5Z,11Z,14Z)-eicosatrienoate + H2O = (8S,9S)-dihydroxy-(5Z,11Z,14Z)-eicosatrienoate. It catalyses the reaction (11S,12R)-epoxy-(5Z,8Z,14Z)-eicosatrienoate + H2O = (11R,12R)-dihydroxy-(5Z,8Z,14Z)-eicosatrienoate. The enzyme catalyses (11S,12R)-epoxy-(5Z,8Z,14Z)-eicosatrienoate + H2O = (11S,12S)-dihydroxy-(5Z,8Z,14Z)-eicosatrienoate. The catalysed reaction is (14S,15R)-epoxy-(5Z,8Z,11Z)-eicosatrienoate + H2O = (14R,15R)-dihydroxy-(5Z,8Z,11Z)-eicosatrienoate. It carries out the reaction (14S,15R)-epoxy-(5Z,8Z,11Z)-eicosatrienoate + H2O = (14S,15S)-dihydroxy-(5Z,8Z,11Z)-eicosatrienoate. It catalyses the reaction (11R,12S)-epoxy-(5Z,8Z,14Z)-eicosatrienoate + H2O = (11S,12S)-dihydroxy-(5Z,8Z,14Z)-eicosatrienoate. The enzyme catalyses (11R,12S)-epoxy-(5Z,8Z,14Z)-eicosatrienoate + H2O = (11R,12R)-dihydroxy-(5Z,8Z,14Z)-eicosatrienoate. The catalysed reaction is (8S,9R)-epoxy-(5Z,11Z,14Z)-eicosatrienoate + H2O = (8R,9R)-dihydroxy-(5Z,11Z,14Z)-eicosatrienoate. It carries out the reaction (14R,15S)-epoxy-(5Z,8Z,11Z)-eicosatrienoate + H2O = (14R,15R)-dihydroxy-(5Z,8Z,11Z)-eicosatrienoate. With respect to regulation, inhibited by 1-(1-acetylpiperidin-4-yl)-3-(4-(trifl uoromethoxy)phenyl)urea (TPAU), 1-cyclohexyl-3-dodecylurea (CDU), 12-(3-adamantan-1-yl-ureido)-dodecanoic acid (AUDA), 1-((3S, 5S, 7S)-adamantan-1-yl)-3-(5-(2-(2-ethoxyethoxy) ethoxy)pentyl)urea (AEPU), N-adamantyl-N[']-cyclohexyl urea (ACU), 4-(((1S, 4S)-4-(3-((3S, 5S, 7S)-adamantan-1-yl) ureido)cyclohexyl)oxy)benzoic acid (c-AUCB), 4-(((1R, 4R)-4-(3-((3S, 5S, 7S)-adamantan-1-yl)ureido)cyclohexyl)oxy)benzoic acid (t-AUCB), 4-(((1R, 4R)-4-(3-(4(trifluoromethoxy)phenyl)ureido)cyclohexyl)oxy)benzoic acid (t-TAUCB) and to a lesser extent by 8-(3-((3S, 5S, 7S)-adamantan-1-yl)ureido) octanoic acid (AUOA). Phosphatase activity is inhibited by dodecyl-phosphate, phospholipids such as phospho-lysophosphatidic acids and fatty acids such as palmitic acid and lauric acid. Its function is as follows. Bifunctional enzyme. The C-terminal domain has epoxide hydrolase activity and acts on epoxides (alkene oxides, oxiranes) and arene oxides. Plays a role in xenobiotic metabolism by degrading potentially toxic epoxides. Also determines steady-state levels of physiological mediators. In terms of biological role, bifunctional enzyme. The N-terminal domain has lipid phosphatase activity, with the highest activity towards threo-9,10-phosphonooxy-hydroxy-octadecanoic acid, followed by erythro-9,10-phosphonooxy-hydroxy-octadecanoic acid, 12-phosphonooxy-octadec-9Z-enoic acid and 12-phosphonooxy-octadec-9E-enoic acid. Has phosphatase activity toward lyso-glycerophospholipids with also some lower activity toward lysolipids of sphingolipid and isoprenoid phosphates. This chain is Bifunctional epoxide hydrolase 2, found in Homo sapiens (Human).